We begin with the raw amino-acid sequence, 876 residues long: Alanine--tRNA ligase (876 aa).

Zn(2+) contacts are provided by His-566, His-570, Cys-668, and His-672.

Belongs to the class-II aminoacyl-tRNA synthetase family. Zn(2+) serves as cofactor.

The protein localises to the cytoplasm. The enzyme catalyses tRNA(Ala) + L-alanine + ATP = L-alanyl-tRNA(Ala) + AMP + diphosphate. Functionally, catalyzes the attachment of alanine to tRNA(Ala) in a two-step reaction: alanine is first activated by ATP to form Ala-AMP and then transferred to the acceptor end of tRNA(Ala). Also edits incorrectly charged Ser-tRNA(Ala) and Gly-tRNA(Ala) via its editing domain. The chain is Alanine--tRNA ligase from Petrotoga mobilis (strain DSM 10674 / SJ95).